The chain runs to 843 residues: Beta-mannosidase B (843 aa).

Residue glutamate 432 is the Proton donor of the active site.

The protein belongs to the glycosyl hydrolase 2 family. Beta-mannosidase B subfamily.

It catalyses the reaction Hydrolysis of terminal, non-reducing beta-D-mannose residues in beta-D-mannosides.. The protein operates within glycan metabolism; N-glycan degradation. Functionally, exoglycosidase that cleaves the single beta-linked mannose residue from the non-reducing end of beta-mannosidic oligosaccharides of various complexity and length. Prefers mannobiose over mannotriose and has no activity against polymeric mannan. Is also severely restricted by galactosyl substitutions at the +1 subsite. Releases the terminal mannose residue from mannobiose, mannotriose and galactosyl-mannotriose (GM3), but not from galactosyl-mannobiose (GM2) or di-galactosyl-mannopentaose (G2M5). In Emericella nidulans (strain FGSC A4 / ATCC 38163 / CBS 112.46 / NRRL 194 / M139) (Aspergillus nidulans), this protein is Beta-mannosidase B (mndB).